The primary structure comprises 565 residues: UvrABC system protein C (565 aa).

A GIY-YIG domain is found at 12–89 (EEPGVYIFKN…IRTHKPKYNV (78 aa)). A UVR domain is found at 195 to 230 (KDVLPTLYEKIEQYASNLAFEKAAFLRDQVLVLQNI).

It belongs to the UvrC family. In terms of assembly, interacts with UvrB in an incision complex.

It is found in the cytoplasm. Its function is as follows. The UvrABC repair system catalyzes the recognition and processing of DNA lesions. UvrC both incises the 5' and 3' sides of the lesion. The N-terminal half is responsible for the 3' incision and the C-terminal half is responsible for the 5' incision. The chain is UvrABC system protein C from Hydrogenobaculum sp. (strain Y04AAS1).